The following is a 665-amino-acid chain: LisH domain-containing protein ARMC9 (665 aa).

Residues 7–39 (HESELLGLVKEYLDFAEFEDTLKTFSKECKIKG) enclose the LisH domain. Residues 201–235 (ENGQSNKEMLQQLHQQLVEAERRSMTYLKRYNKIQ) adopt a coiled-coil conformation. A Phosphoserine modification is found at Ser-582. Residues 642–665 (VQWSGDEPLQRPVTPGGHRNGYPV) are disordered.

As to quaternary structure, interacts with TOGARAM1, CCDC66, CEP104, CSPP1 and CEP290. Interacts with NDUFAF2.

The protein localises to the cytoplasm. It is found in the cytoskeleton. The protein resides in the cilium basal body. It localises to the cell projection. Its subcellular location is the cilium. The protein localises to the microtubule organizing center. It is found in the centrosome. The protein resides in the centriole. Involved in ciliogenesis. It is required for appropriate acetylation and polyglutamylation of ciliary microtubules, and regulation of cilium length. Acts as a positive regulator of hedgehog (Hh)signaling. May participate in the trafficking and/or retention of GLI2 and GLI3 proteins at the ciliary tip. This chain is LisH domain-containing protein ARMC9 (ARMC9), found in Pongo abelii (Sumatran orangutan).